Consider the following 421-residue polypeptide: Cyclin-A2 (421 aa).

Met-1 is subject to N-acetylmethionine. A disordered region spans residues 1 to 60 (MPGSSRQSGREAGSALLSLQQEDQENVNPEKAAPDQRARAALKTGNARGNAPQQRLKARR). Ser-5 carries the phosphoserine modification.

It belongs to the cyclin family. Cyclin AB subfamily. As to quaternary structure, interacts with the CDK1 and CDK2 protein kinases to form serine/threonine kinase holoenzyme complexes. Interacts with CDK1 (hyperphosphorylated form in G1 and underphosphorylated forms in S and G2). Interacts with CDK2; the interaction increases from G1 to G2. Interacts (associated with CDK2 but not with CDK1) with SCAPER; regulates the activity of CCNA2/CDK2 by transiently maintaining CCNA2 in the cytoplasm. Forms a ternary complex with CDK2 and CDKN1B; CDKN1B inhibits the kinase activity of CDK2 through conformational rearrangements. Interacts with INCA1. In terms of processing, polyubiquitinated via 'Lys-11'-linked ubiquitin by the anaphase-promoting complex (APC/C), leading to its degradation by the proteasome. Deubiquitinated and stabilized by USP37 enables entry into S phase. Ubiquitinated during the G1 phase by the SCF(FBXO31) complex, leading to its proteasomal degradation.

The protein localises to the nucleus. Its subcellular location is the cytoplasm. Cyclin which controls both the G1/S and the G2/M transition phases of the cell cycle. Functions through the formation of specific serine/threonine kinase holoenzyme complexes with the cyclin-dependent protein kinases CDK1 and CDK2. The cyclin subunit confers the substrate specificity of these complexes and differentially interacts with and activates CDK1 and CDK2 throughout the cell cycle. The polypeptide is Cyclin-A2 (Mesocricetus auratus (Golden hamster)).